A 337-amino-acid polypeptide reads, in one-letter code: tRNA N6-adenosine threonylcarbamoyltransferase (337 aa).

Residues His114 and His118 each coordinate Fe cation. Substrate is bound by residues 136–140, Asp169, Gly182, Asp186, and Asn275; that span reads LVSGG. Asp301 contacts Fe cation.

It belongs to the KAE1 / TsaD family. The cofactor is Fe(2+).

The protein resides in the cytoplasm. The catalysed reaction is L-threonylcarbamoyladenylate + adenosine(37) in tRNA = N(6)-L-threonylcarbamoyladenosine(37) in tRNA + AMP + H(+). Functionally, required for the formation of a threonylcarbamoyl group on adenosine at position 37 (t(6)A37) in tRNAs that read codons beginning with adenine. Is involved in the transfer of the threonylcarbamoyl moiety of threonylcarbamoyl-AMP (TC-AMP) to the N6 group of A37, together with TsaE and TsaB. TsaD likely plays a direct catalytic role in this reaction. In Streptococcus thermophilus (strain ATCC BAA-491 / LMD-9), this protein is tRNA N6-adenosine threonylcarbamoyltransferase.